The following is a 217-amino-acid chain: 3-demethoxyubiquinol 3-hydroxylase (217 aa).

Glu66, Glu96, His99, Glu148, Glu180, and His183 together coordinate Fe cation.

This sequence belongs to the COQ7 family. The cofactor is Fe cation.

The protein localises to the cell membrane. The enzyme catalyses a 5-methoxy-2-methyl-3-(all-trans-polyprenyl)benzene-1,4-diol + AH2 + O2 = a 3-demethylubiquinol + A + H2O. It participates in cofactor biosynthesis; ubiquinone biosynthesis. In terms of biological role, catalyzes the hydroxylation of 2-nonaprenyl-3-methyl-6-methoxy-1,4-benzoquinol during ubiquinone biosynthesis. In Xanthomonas oryzae pv. oryzae (strain MAFF 311018), this protein is 3-demethoxyubiquinol 3-hydroxylase.